A 324-amino-acid chain; its full sequence is Elongation factor P--(R)-beta-lysine ligase (324 aa).

75 to 77 (SPE) contacts substrate. Residues 99–101 (RNQ) and N108 contribute to the ATP site. Residue Y117 participates in substrate binding. Residue 243 to 244 (EL) coordinates ATP. E250 provides a ligand contact to substrate. G299 serves as a coordination point for ATP.

Belongs to the class-II aminoacyl-tRNA synthetase family. EpmA subfamily. In terms of assembly, homodimer.

The enzyme catalyses D-beta-lysine + L-lysyl-[protein] + ATP = N(6)-((3R)-3,6-diaminohexanoyl)-L-lysyl-[protein] + AMP + diphosphate + H(+). With EpmB is involved in the beta-lysylation step of the post-translational modification of translation elongation factor P (EF-P). Catalyzes the ATP-dependent activation of (R)-beta-lysine produced by EpmB, forming a lysyl-adenylate, from which the beta-lysyl moiety is then transferred to the epsilon-amino group of a conserved specific lysine residue in EF-P. The polypeptide is Elongation factor P--(R)-beta-lysine ligase (Buchnera aphidicola subsp. Schizaphis graminum (strain Sg)).